The primary structure comprises 252 residues: Ribosomal RNA large subunit methyltransferase E (252 aa).

Residues Gly48, Trp50, Asp68, Asp84, and Asp107 each contribute to the S-adenosyl-L-methionine site. The active-site Proton acceptor is Lys147. One can recognise a TRAM domain in the interval 194–252 (PVREGDTLEVEIDNLGDEGDGVAKVDGYTLFVSGAEPGDAPEVRVTDVKPRFGFAETLE).

The protein belongs to the class I-like SAM-binding methyltransferase superfamily. RNA methyltransferase RlmE family.

Its subcellular location is the cytoplasm. The catalysed reaction is uridine(2552) in 23S rRNA + S-adenosyl-L-methionine = 2'-O-methyluridine(2552) in 23S rRNA + S-adenosyl-L-homocysteine + H(+). Its function is as follows. Specifically methylates the uridine in position 2552 of 23S rRNA at the 2'-O position of the ribose in the fully assembled 50S ribosomal subunit. The protein is Ribosomal RNA large subunit methyltransferase E of Natronomonas pharaonis (strain ATCC 35678 / DSM 2160 / CIP 103997 / JCM 8858 / NBRC 14720 / NCIMB 2260 / Gabara) (Halobacterium pharaonis).